The primary structure comprises 227 residues: Transcription antitermination protein NusB (227 aa).

Disordered stretches follow at residues Ala165–Asp189 and Ala201–Ser227. 2 stretches are compositionally biased toward acidic residues: residues Asp178 to Asp189 and Ala201 to Ser214. Over residues Glu215–Ser227 the composition is skewed to basic and acidic residues.

The protein belongs to the NusB family.

Involved in transcription antitermination. Required for transcription of ribosomal RNA (rRNA) genes. Binds specifically to the boxA antiterminator sequence of the ribosomal RNA (rrn) operons. The polypeptide is Transcription antitermination protein NusB (Corynebacterium glutamicum (strain ATCC 13032 / DSM 20300 / JCM 1318 / BCRC 11384 / CCUG 27702 / LMG 3730 / NBRC 12168 / NCIMB 10025 / NRRL B-2784 / 534)).